Reading from the N-terminus, the 338-residue chain is GTPase Obg (338 aa).

The Obg domain occupies 1–159 (MKFIDEVTLF…AKLRLELKLM (159 aa)). The OBG-type G domain occupies 160-331 (ADVGLLGLPN…LLDEIARRLW (172 aa)). Residues 166-173 (GLPNAGKS), 191-195 (FTTIK), 213-216 (DIPG), 283-286 (TKLD), and 312-314 (SSA) each bind GTP. Mg(2+) is bound by residues serine 173 and threonine 193.

This sequence belongs to the TRAFAC class OBG-HflX-like GTPase superfamily. OBG GTPase family. Monomer. Mg(2+) is required as a cofactor.

It localises to the cytoplasm. An essential GTPase which binds GTP, GDP and possibly (p)ppGpp with moderate affinity, with high nucleotide exchange rates and a fairly low GTP hydrolysis rate. Plays a role in control of the cell cycle, stress response, ribosome biogenesis and in those bacteria that undergo differentiation, in morphogenesis control. The sequence is that of GTPase Obg from Pelobacter propionicus (strain DSM 2379 / NBRC 103807 / OttBd1).